The primary structure comprises 143 residues: Small ribosomal subunit protein bS6 (143 aa).

Positions 97–143 (DTEQSLIMKSKDEKGDKHERSERRRRDDEEGDVPAATDTDGDNAEAA) are disordered. Residues 105 to 124 (KSKDEKGDKHERSERRRRDD) are compositionally biased toward basic and acidic residues.

The protein belongs to the bacterial ribosomal protein bS6 family.

Binds together with bS18 to 16S ribosomal RNA. The sequence is that of Small ribosomal subunit protein bS6 from Xanthomonas oryzae pv. oryzae (strain MAFF 311018).